The sequence spans 261 residues: Putative outer membrane protein TC_0650 (261 aa).

The first 17 residues, 1 to 17 (MRFLFAFILLCSPWVSE), serve as a signal peptide directing secretion.

It localises to the cell outer membrane. The protein is Putative outer membrane protein TC_0650 of Chlamydia muridarum (strain MoPn / Nigg).